A 203-amino-acid chain; its full sequence is UPF0637 protein SERP0693 (203 aa).

It belongs to the UPF0637 family.

The protein is UPF0637 protein SERP0693 of Staphylococcus epidermidis (strain ATCC 35984 / DSM 28319 / BCRC 17069 / CCUG 31568 / BM 3577 / RP62A).